The chain runs to 73 residues: Large ribosomal subunit protein bL31 (73 aa).

Residues Cys16, Cys18, Cys38, and Cys41 each contribute to the Zn(2+) site.

This sequence belongs to the bacterial ribosomal protein bL31 family. Type A subfamily. Part of the 50S ribosomal subunit. Zn(2+) is required as a cofactor.

In terms of biological role, binds the 23S rRNA. The polypeptide is Large ribosomal subunit protein bL31 (Vibrio parahaemolyticus serotype O3:K6 (strain RIMD 2210633)).